Reading from the N-terminus, the 172-residue chain is Phosphopantetheine adenylyltransferase (172 aa).

Thr-14 lines the substrate pocket. ATP-binding positions include 14–15 (TF) and His-22. Residues Lys-46, Leu-78, and Arg-92 each coordinate substrate. ATP is bound by residues 93 to 95 (GLR), Glu-103, and 128 to 134 (WLYISST).

The protein belongs to the bacterial CoaD family. Homohexamer. Mg(2+) serves as cofactor.

The protein resides in the cytoplasm. It carries out the reaction (R)-4'-phosphopantetheine + ATP + H(+) = 3'-dephospho-CoA + diphosphate. Its pathway is cofactor biosynthesis; coenzyme A biosynthesis; CoA from (R)-pantothenate: step 4/5. Functionally, reversibly transfers an adenylyl group from ATP to 4'-phosphopantetheine, yielding dephospho-CoA (dPCoA) and pyrophosphate. The polypeptide is Phosphopantetheine adenylyltransferase (Lawsonia intracellularis (strain PHE/MN1-00)).